Here is a 418-residue protein sequence, read N- to C-terminus: STAM-binding protein-like A (418 aa).

The tract at residues 199–218 (PDVHGPPQASLSPQTPPAGA) is disordered. Positions 251-382 (LFVPAELCQR…LTDYGMDDVG (132 aa)) constitute an MPN domain. Zn(2+) contacts are provided by H329, H331, D342, H344, C384, H390, and H392. The JAMM motif signature appears at 329–342 (HTHPTQTAFLSSVD).

This sequence belongs to the peptidase M67C family. Requires Zn(2+) as cofactor.

In terms of biological role, zinc metalloprotease that specifically cleaves 'Lys-63'-linked polyubiquitin chains. Does not cleave 'Lys-48'-linked polyubiquitin chains. Functions at the endosome and is able to oppose the ubiquitin-dependent sorting of receptors to lysosomes. The polypeptide is STAM-binding protein-like A (stambpa) (Danio rerio (Zebrafish)).